Consider the following 158-residue polypeptide: Superoxide dismutase [Cu-Zn] (158 aa).

His-46, His-48, and His-63 together coordinate Cu cation. A disulfide bridge connects residues Cys-57 and Cys-149. Zn(2+) contacts are provided by His-63, His-71, His-80, and Asp-83. A Cu cation-binding site is contributed by His-120.

Belongs to the Cu-Zn superoxide dismutase family. Homodimer. Cu cation is required as a cofactor. Zn(2+) serves as cofactor.

Its subcellular location is the cytoplasm. The catalysed reaction is 2 superoxide + 2 H(+) = H2O2 + O2. In terms of biological role, destroys radicals which are normally produced within the cells and which are toxic to biological systems. The chain is Superoxide dismutase [Cu-Zn] (sod-1) from Onchocerca volvulus.